A 39-amino-acid chain; its full sequence is QMMMFITVYDINQKQKKRYGLRGCNLNLKATVLPLHKRI.

The protein belongs to the asfivirus C84L family.

This is an uncharacterized protein from African swine fever virus (isolate Warthog/Namibia/Wart80/1980) (ASFV).